The chain runs to 416 residues: CinA-like protein (416 aa).

It belongs to the CinA family.

The protein is CinA-like protein of Amoebophilus asiaticus (strain 5a2).